The primary structure comprises 489 residues: Pup--protein ligase (489 aa).

Glu25 is a binding site for Mg(2+). Arg69 contacts ATP. Mg(2+) is bound at residue Tyr71. The active-site Proton acceptor is Asp73. Position 79 (Glu79) interacts with Mg(2+). Positions 82 and 447 each coordinate ATP.

It belongs to the Pup ligase/Pup deamidase family. Pup-conjugating enzyme subfamily.

The catalysed reaction is ATP + [prokaryotic ubiquitin-like protein]-L-glutamate + [protein]-L-lysine = ADP + phosphate + N(6)-([prokaryotic ubiquitin-like protein]-gamma-L-glutamyl)-[protein]-L-lysine.. It functions in the pathway protein degradation; proteasomal Pup-dependent pathway. Its pathway is protein modification; protein pupylation. In terms of biological role, catalyzes the covalent attachment of the prokaryotic ubiquitin-like protein modifier Pup to the proteasomal substrate proteins, thereby targeting them for proteasomal degradation. This tagging system is termed pupylation. The ligation reaction involves the side-chain carboxylate of the C-terminal glutamate of Pup and the side-chain amino group of a substrate lysine. The sequence is that of Pup--protein ligase from Corynebacterium efficiens (strain DSM 44549 / YS-314 / AJ 12310 / JCM 11189 / NBRC 100395).